Here is a 201-residue protein sequence, read N- to C-terminus: NAD(P)H dehydrogenase (quinone) (201 aa).

Residues 7 to 192 (ILVLYYSMYG…SIARYQGEYV (186 aa)) form the Flavodoxin-like domain. FMN-binding positions include 13–18 (SMYGHI) and 81–83 (TRF). Tyr15 serves as a coordination point for NAD(+). Trp101 contacts substrate. Residues 116 to 121 (STGTGG) and His136 contribute to the FMN site.

It belongs to the WrbA family. The cofactor is FMN.

The catalysed reaction is a quinone + NADH + H(+) = a quinol + NAD(+). It catalyses the reaction a quinone + NADPH + H(+) = a quinol + NADP(+). The polypeptide is NAD(P)H dehydrogenase (quinone) (Shigella sonnei (strain Ss046)).